A 400-amino-acid polypeptide reads, in one-letter code: Acetate kinase (400 aa).

N10 contacts Mg(2+). An ATP-binding site is contributed by K17. R91 serves as a coordination point for substrate. D150 (proton donor/acceptor) is an active-site residue. ATP-binding positions include 210–214 (HLGNG), 285–287 (DCR), and 333–337 (GIGEN). Position 387 (E387) interacts with Mg(2+).

Belongs to the acetokinase family. Homodimer. Requires Mg(2+) as cofactor. Mn(2+) is required as a cofactor.

The protein localises to the cytoplasm. It catalyses the reaction acetate + ATP = acetyl phosphate + ADP. It participates in metabolic intermediate biosynthesis; acetyl-CoA biosynthesis; acetyl-CoA from acetate: step 1/2. Functionally, catalyzes the formation of acetyl phosphate from acetate and ATP. Can also catalyze the reverse reaction. The polypeptide is Acetate kinase (Yersinia pseudotuberculosis serotype I (strain IP32953)).